Consider the following 149-residue polypeptide: Pleckstrin homology domain-containing family J member 1 (149 aa).

Residues 15–108 (PAEKAAEILM…WIEALKRASY (94 aa)) form the PH domain.

The sequence is that of Pleckstrin homology domain-containing family J member 1 (PLEKHJ1) from Gallus gallus (Chicken).